The primary structure comprises 580 residues: Protein O-linked-mannose beta-1,4-N-acetylglucosaminyltransferase 2 (580 aa).

At Met-1–Ser-4 the chain is on the cytoplasmic side. The chain crosses the membrane as a helical; Signal-anchor for type II membrane protein span at residues Ala-5–Leu-25. Residues Arg-26 to Thr-580 lie on the Lumenal side of the membrane. Residues Asn-99 and Asn-276 are each glycosylated (N-linked (GlcNAc...) asparagine). In terms of domain architecture, Fibronectin type-III spans Ala-488–Thr-580.

This sequence belongs to the glycosyltransferase 61 family. As to expression, mainly expressed in the central nervous system.

It localises to the endoplasmic reticulum membrane. It carries out the reaction 3-O-(alpha-D-mannosyl)-L-threonyl-[protein] + UDP-N-acetyl-alpha-D-glucosamine = 3-O-(N-acetyl-beta-D-glucosaminyl-(1-&gt;4)-alpha-D-mannosyl)-L-threonyl-[protein] + UDP + H(+). It participates in protein modification; protein glycosylation. O-linked mannose beta-1,4-N-acetylglucosaminyltransferase that transfers UDP-N-acetyl-D-glucosamine to the 4-position of the mannose to generate N-acetyl-D-glucosamine-beta-1,4-O-D-mannosylprotein. Involved in the biosynthesis of the phosphorylated O-mannosyl trisaccharide (N-acetylgalactosamine-beta-3-N-acetylglucosamine-beta-4-(phosphate-6-)mannose), a carbohydrate structure present in alpha-dystroglycan (DAG1), which is required for binding laminin G-like domain-containing extracellular proteins with high affinity. In Mus musculus (Mouse), this protein is Protein O-linked-mannose beta-1,4-N-acetylglucosaminyltransferase 2 (Pomgnt2).